We begin with the raw amino-acid sequence, 64 residues long: Metallothionein-like protein 1 (64 aa).

It belongs to the metallothionein superfamily. Type 15 family.

Metallothioneins have a high content of cysteine residues that bind various heavy metals. The polypeptide is Metallothionein-like protein 1 (MT1) (Prunus avium (Cherry)).